The chain runs to 31 residues: Cytochrome b6-f complex subunit 6 (31 aa).

The helical transmembrane segment at 4-24 threads the bilayer; the sequence is LLSYFGFLFAILTLTSVLFIG.

Belongs to the PetL family. As to quaternary structure, the 4 large subunits of the cytochrome b6-f complex are cytochrome b6, subunit IV (17 kDa polypeptide, PetD), cytochrome f and the Rieske protein, while the 4 small subunits are PetG, PetL, PetM and PetN. The complex functions as a dimer.

It is found in the plastid. Its subcellular location is the chloroplast thylakoid membrane. In terms of biological role, component of the cytochrome b6-f complex, which mediates electron transfer between photosystem II (PSII) and photosystem I (PSI), cyclic electron flow around PSI, and state transitions. PetL is important for photoautotrophic growth as well as for electron transfer efficiency and stability of the cytochrome b6-f complex. In Angiopteris evecta (Mule's foot fern), this protein is Cytochrome b6-f complex subunit 6.